The sequence spans 657 residues: MFLSHPPQVIQPTYHTVNFLPRSPLKPPSCSVALNNPSISSGAGAKISNNQLIQSLCKEGKLKQAIRVLSQESSPSQQTYELLILCCGHRSSLSDALRVHRHILDNGSDQDPFLATKLIGMYSDLGSVDYARKVFDKTRKRTIYVWNALFRALTLAGHGEEVLGLYWKMNRIGVESDRFTYTYVLKACVASECTVNHLMKGKEIHAHLTRRGYSSHVYIMTTLVDMYARFGCVDYASYVFGGMPVRNVVSWSAMIACYAKNGKAFEALRTFREMMRETKDSSPNSVTMVSVLQACASLAALEQGKLIHGYILRRGLDSILPVISALVTMYGRCGKLEVGQRVFDRMHDRDVVSWNSLISSYGVHGYGKKAIQIFEEMLANGASPTPVTFVSVLGACSHEGLVEEGKRLFETMWRDHGIKPQIEHYACMVDLLGRANRLDEAAKMVQDMRTEPGPKVWGSLLGSCRIHGNVELAERASRRLFALEPKNAGNYVLLADIYAEAQMWDEVKRVKKLLEHRGLQKLPGRCWMEVRRKMYSFVSVDEFNPLMEQIHAFLVKLAEDMKEKGYIPQTKGVLYELETEEKERIVLGHSEKLALAFGLINTSKGEPIRITKNLRLCEDCHLFTKFISKFMEKEILVRDVNRFHRFKNGVCSCGDYW.

The N-terminal 51 residues, 1-51, are a transit peptide targeting the chloroplast; the sequence is MFLSHPPQVIQPTYHTVNFLPRSPLKPPSCSVALNNPSISSGAGAKISNNQ. PPR repeat units lie at residues 45–75, 76–110, 111–141, 142–176, 177–215, 216–246, 247–277, 284–318, 319–349, 350–384, 385–420, and 421–451; these read AKISNNQLIQSLCKEGKLKQAIRVLSQESSP, SQQTYELLILCCGHRSSLSDALRVHRHILDNGSDQ, DPFLATKLIGMYSDLGSVDYARKVFDKTRKR, TIYVWNALFRALTLAGHGEEVLGLYWKMNRIGVES, DRFTYTYVLKACVASECTVNHLMKGKEIHAHLTRRGYSS, HVYIMTTLVDMYARFGCVDYASYVFGGMPVR, NVVSWSAMIACYAKNGKAFEALRTFREMMRE, NSVTMVSVLQACASLAALEQGKLIHGYILRRGLDS, ILPVISALVTMYGRCGKLEVGQRVFDRMHDR, DVVSWNSLISSYGVHGYGKKAIQIFEEMLANGASP, TPVTFVSVLGACSHEGLVEEGKRLFETMWRDHGIKP, and QIEHYACMVDLLGRANRLDEAAKMVQDMRTE. A type E motif region spans residues 456-531; sequence VWGSLLGSCR…LPGRCWMEVR (76 aa). The segment at 532 to 562 is type E(+) motif; that stretch reads RKMYSFVSVDEFNPLMEQIHAFLVKLAEDMK. Residues 563–657 form a type DYW motif region; that stretch reads EKGYIPQTKG…NGVCSCGDYW (95 aa).

Belongs to the PPR family. PCMP-H subfamily.

It is found in the plastid. It localises to the chloroplast. Required for the intergenic processing between chloroplast rsp7 and ndhB transcripts. Necessary for chloroplast NADH dehydrogenase-like (NDH) complex-dependent cyclic electron transport around PSI (CET). This is Pentatricopeptide repeat-containing protein CRR2, chloroplastic from Arabidopsis thaliana (Mouse-ear cress).